A 320-amino-acid polypeptide reads, in one-letter code: D-alanine--D-alanine ligase (320 aa).

An ATP-grasp domain is found at 120-314 (SSWFFANSIN…FTNLIAEIIK (195 aa)). Position 147–198 (147–198 (MKRPYVIKPLTQGSSIGVEVIFEEDDFNFADYDFPYGDQVVIERYIKGREFQ)) interacts with ATP. Positions 267, 281, and 283 each coordinate Mg(2+).

This sequence belongs to the D-alanine--D-alanine ligase family. The cofactor is Mg(2+). Requires Mn(2+) as cofactor.

It localises to the cytoplasm. The catalysed reaction is 2 D-alanine + ATP = D-alanyl-D-alanine + ADP + phosphate + H(+). The protein operates within cell wall biogenesis; peptidoglycan biosynthesis. In terms of biological role, cell wall formation. This is D-alanine--D-alanine ligase from Rickettsia akari (strain Hartford).